The chain runs to 512 residues: PTS system mannitol-specific EIICB component (512 aa).

At 1–28 (MSQTEEKKGIGRRVQAFGSFLSSMIMPN) the chain is on the cytoplasmic side. Positions 17-349 (FGSFLSSMIM…MKFTREPKQD (333 aa)) constitute a PTS EIIC type-2 domain. The helical transmembrane segment at 29-50 (IGAFIAWGFIAAIFIDNGWLPN) threads the bilayer. Residues 51–54 (KDLA) are Extracellular-facing. Residues 55–75 (TLAGPMITYLIPLLIAFSGGR) traverse the membrane as a helical segment. Topologically, residues 76 to 139 (LIYDLRGGII…QGFEMLFNNF (64 aa)) are cytoplasmic. Residues 140 to 161 (SAGILGFIMTIAGFKILAPLMK) form a helical membrane-spanning segment. Residues 162 to 170 (FIMHILSVA) lie on the Extracellular side of the membrane. Residues 171–191 (VEALVHAHLLPLVSILVEPAK) form a helical membrane-spanning segment. At 192 to 278 (IVFLNNAINH…VLMRPLLFIA (87 aa)) the chain is on the cytoplasmic side. A helical transmembrane segment spans residues 279-298 (VILGGMTGVATYQATGFGFK). The Extracellular segment spans residues 299 to 318 (SPASPGSFIVYCLNAPRGEF). The helical transmembrane segment at 319-340 (LHMLLGVFLAALVSFVVAALIM) threads the bilayer. The Cytoplasmic portion of the chain corresponds to 341-512 (KFTREPKQDL…LNNLKKDDQA (172 aa)). The interval 355–402 (AQMENTKGKKSSVASKLVSSDKNVNTEENASGNVSETSSSDDDPEALL) is disordered. Residues 365 to 376 (SSVASKLVSSDK) show a composition bias toward low complexity. A compositionally biased stretch (polar residues) spans 380 to 392 (TEENASGNVSETS). The PTS EIIB type-2 domain occupies 419-512 (NHVIFACDAG…LNNLKKDDQA (94 aa)). Cys425 serves as the catalytic Phosphocysteine intermediate; for EIIB activity. Cys425 is modified (phosphocysteine; by EIIA).

Homodimer.

The protein resides in the cell membrane. The catalysed reaction is D-mannitol(out) + N(pros)-phospho-L-histidyl-[protein] = D-mannitol 1-phosphate(in) + L-histidyl-[protein]. Functionally, the phosphoenolpyruvate-dependent sugar phosphotransferase system (sugar PTS), a major carbohydrate active transport system, catalyzes the phosphorylation of incoming sugar substrates concomitantly with their translocation across the cell membrane. The enzyme II CmtAB PTS system is involved in D-mannitol transport. This is PTS system mannitol-specific EIICB component (mtlA) from Staphylococcus aureus (strain Mu50 / ATCC 700699).